Consider the following 509-residue polypeptide: Maturase K (509 aa).

This sequence belongs to the intron maturase 2 family. MatK subfamily.

It localises to the plastid. The protein localises to the chloroplast. Its function is as follows. Usually encoded in the trnK tRNA gene intron. Probably assists in splicing its own and other chloroplast group II introns. This is Maturase K from Dalea purpurea (Violet prairie clover).